The chain runs to 158 residues: Transcription elongation factor GreA (158 aa).

Residues 53–73 (EQQSFVEGRIQEIEGKLSNAQ) adopt a coiled-coil conformation.

Belongs to the GreA/GreB family.

Its function is as follows. Necessary for efficient RNA polymerase transcription elongation past template-encoded arresting sites. The arresting sites in DNA have the property of trapping a certain fraction of elongating RNA polymerases that pass through, resulting in locked ternary complexes. Cleavage of the nascent transcript by cleavage factors such as GreA or GreB allows the resumption of elongation from the new 3'terminus. GreA releases sequences of 2 to 3 nucleotides. The polypeptide is Transcription elongation factor GreA (Alkalilimnicola ehrlichii (strain ATCC BAA-1101 / DSM 17681 / MLHE-1)).